Consider the following 595-residue polypeptide: Chaperone protein HscA homolog (595 aa).

It belongs to the heat shock protein 70 family.

In terms of biological role, chaperone involved in the maturation of iron-sulfur cluster-containing proteins. Has a low intrinsic ATPase activity which is markedly stimulated by HscB. In Rickettsia peacockii (strain Rustic), this protein is Chaperone protein HscA homolog.